Here is a 340-residue protein sequence, read N- to C-terminus: GTPase Obg (340 aa).

The 159-residue stretch at 1–159 folds into the Obg domain; sequence MGFIDEVKLC…KHVLLKLKVL (159 aa). The region spanning 160–329 is the OBG-type G domain; the sequence is SDVGIIGMPN…LSEKLKKSNS (170 aa). GTP is bound by residues 166–173, 191–195, 212–215, 279–282, and 310–312; these read GMPNAGKS, FTTVR, DIPG, NKCD, and NGD. The Mg(2+) site is built by serine 173 and threonine 193.

It belongs to the TRAFAC class OBG-HflX-like GTPase superfamily. OBG GTPase family. In terms of assembly, monomer. Mg(2+) is required as a cofactor.

It localises to the cytoplasm. In terms of biological role, an essential GTPase which binds GTP, GDP and possibly (p)ppGpp with moderate affinity, with high nucleotide exchange rates and a fairly low GTP hydrolysis rate. Plays a role in control of the cell cycle, stress response, ribosome biogenesis and in those bacteria that undergo differentiation, in morphogenesis control. In Wolbachia sp. subsp. Drosophila simulans (strain wRi), this protein is GTPase Obg.